The sequence spans 613 residues: Penicillin-binding protein activator LpoA (613 aa).

The signal sequence occupies residues 1 to 29 (MNSMLNFTHKRKSVSRLLAPVALAVILAG). The N-palmitoyl cysteine moiety is linked to residue Cys-30. A lipid anchor (S-diacylglycerol cysteine) is attached at Cys-30.

Belongs to the LpoA family. As to quaternary structure, interacts with PBP1a.

It localises to the cell outer membrane. In terms of biological role, regulator of peptidoglycan synthesis that is essential for the function of penicillin-binding protein 1A (PBP1a). The sequence is that of Penicillin-binding protein activator LpoA from Photobacterium profundum (strain SS9).